A 420-amino-acid polypeptide reads, in one-letter code: Shaggy-related protein kinase delta (420 aa).

A disordered region spans residues 1–61; the sequence is MESHLGNGVG…DIIDGVGAEP (61 aa). A compositionally biased stretch (polar residues) spans 10 to 26; sequence GSSRSAKNTKNTSSSVD. The span at 28-41 shows a compositional bias: basic and acidic residues; sequence LSRDMLEMKIRDKT. Residues 42 to 53 are compositionally biased toward acidic residues; it reads EADEERDSEPDI. One can recognise a Protein kinase domain in the interval 82–366; it reads YIAEHVVGTG…AVEACIHPFF (285 aa). Residues 88–96 and K111 each bind ATP; that span reads VGTGSFGMV. The active-site Proton acceptor is D207. Y242 bears the Phosphotyrosine mark.

This sequence belongs to the protein kinase superfamily. CMGC Ser/Thr protein kinase family. GSK-3 subfamily. Post-translationally, autophosphorylated mainly on threonine and serine residues.

It catalyses the reaction L-seryl-[protein] + ATP = O-phospho-L-seryl-[protein] + ADP + H(+). The enzyme catalyses L-threonyl-[protein] + ATP = O-phospho-L-threonyl-[protein] + ADP + H(+). Its function is as follows. May mediate extracellular signals to regulate transcription in differentiating cells. In Arabidopsis thaliana (Mouse-ear cress), this protein is Shaggy-related protein kinase delta (ASK4).